The chain runs to 643 residues: Threonine--tRNA ligase (643 aa).

The region spanning Asp3 to Thr64 is the TGS domain. Residues Asp245 to Pro542 are catalytic. Positions 338, 389, and 519 each coordinate Zn(2+).

The protein belongs to the class-II aminoacyl-tRNA synthetase family. In terms of assembly, homodimer. It depends on Zn(2+) as a cofactor.

It is found in the cytoplasm. It catalyses the reaction tRNA(Thr) + L-threonine + ATP = L-threonyl-tRNA(Thr) + AMP + diphosphate + H(+). In terms of biological role, catalyzes the attachment of threonine to tRNA(Thr) in a two-step reaction: L-threonine is first activated by ATP to form Thr-AMP and then transferred to the acceptor end of tRNA(Thr). Also edits incorrectly charged L-seryl-tRNA(Thr). The sequence is that of Threonine--tRNA ligase from Anoxybacillus flavithermus (strain DSM 21510 / WK1).